Consider the following 299-residue polypeptide: Plasmodesmata-located protein 5 (299 aa).

The N-terminal stretch at 1–25 is a signal peptide; it reads MIKTKTTSLLCFLLTAVILMNPSSS. Residues 26–264 lie on the Extracellular side of the membrane; that stretch reads SPTDNYIYAV…NKDDNGVGKT (239 aa). Gnk2-homologous domains lie at 29-135 and 137-237; these read DNYI…NKSF and GVQD…VGGS. Disulfide bonds link Cys-36–Cys-113, Cys-89–Cys-98, Cys-101–Cys-126, Cys-148–Cys-215, Cys-191–Cys-200, and Cys-203–Cys-228. Residues 265 to 285 traverse the membrane as a helical segment; it reads LAIIIGIVTLIILLVVFLAFV. Residues 265–285 are necessary and sufficient for plasmodesmal targeting; the sequence is LAIIIGIVTLIILLVVFLAFV. The Cytoplasmic segment spans residues 286–299; it reads GKCCRKLQDEKWCK.

The protein belongs to the cysteine-rich repeat secretory protein family. Plasmodesmata-located proteins (PDLD) subfamily. In terms of assembly, monomer. Interacts with PDLP1. (Microbial infection) Interacts with Grapevine fanleaf virus (GFLV) 2B-MP. As to expression, highly expressed in inflorescence nodes and rosette senescent leaves. Mostly expressed in cell wall junctions between leaf epidermal and mesophyl cells, and to a lesser extent at the cross walls between epidermal or cortex cells within the hypocotyl (at protein level). Low vascular expression in seedling and mature leaf, but high expression in senescing leaves (at protein level).

It is found in the cell membrane. It localises to the cell junction. The protein localises to the plasmodesma. In terms of biological role, modulates cell-to-cell trafficking. Has a positive role in innate immunity. Required for systemic acquired resistance (SAR) which is mediated by the signaling molecules azelaic acid (AzA), glycerol-3-phosphate (G3P), and salicylic acid (SA). Negative regulator of plasmodesmata permeability triggered by SA during immune responses, through regulation of callose deposition. Delays the trafficking of Tobacco Mosaic Virus (TMV) movement protein (MP). Required for symplastic signal transport. The polypeptide is Plasmodesmata-located protein 5 (Arabidopsis thaliana (Mouse-ear cress)).